Reading from the N-terminus, the 236-residue chain is Leucyl/phenylalanyl-tRNA--protein transferase (236 aa).

This sequence belongs to the L/F-transferase family.

Its subcellular location is the cytoplasm. The catalysed reaction is N-terminal L-lysyl-[protein] + L-leucyl-tRNA(Leu) = N-terminal L-leucyl-L-lysyl-[protein] + tRNA(Leu) + H(+). It catalyses the reaction N-terminal L-arginyl-[protein] + L-leucyl-tRNA(Leu) = N-terminal L-leucyl-L-arginyl-[protein] + tRNA(Leu) + H(+). It carries out the reaction L-phenylalanyl-tRNA(Phe) + an N-terminal L-alpha-aminoacyl-[protein] = an N-terminal L-phenylalanyl-L-alpha-aminoacyl-[protein] + tRNA(Phe). In terms of biological role, functions in the N-end rule pathway of protein degradation where it conjugates Leu, Phe and, less efficiently, Met from aminoacyl-tRNAs to the N-termini of proteins containing an N-terminal arginine or lysine. This is Leucyl/phenylalanyl-tRNA--protein transferase from Aliivibrio salmonicida (strain LFI1238) (Vibrio salmonicida (strain LFI1238)).